The primary structure comprises 348 residues: Probable WRKY transcription factor 27 (348 aa).

Disordered stretches follow at residues 19–52 (VSTT…ASSS), 67–90 (TTTT…SPSP), 133–153 (LLQQ…QQKR), and 218–320 (GEHT…LIPN). The span at 75–85 (SPPPLLPPPKA) shows a compositional bias: pro residues. The segment covering 133–142 (LLQQQSQPPL) has biased composition (low complexity). Positions 143-153 (RSRKRKNQQKR) are enriched in basic residues. The WRKY DNA-binding region spans 159 to 225 (TQENLSSDLW…YTGEHTHPRP (67 aa)). A compositionally biased stretch (polar residues) spans 228–242 (RNSLAGSTRNKSQPV). The segment covering 274–315 (DVQETNGDEDMVGQEVNMEEEEEEEEVEEDDEEEEDDDDVDD) has biased composition (acidic residues).

This sequence belongs to the WRKY group II-e family.

The protein localises to the nucleus. Transcription factor. Interacts specifically with the W box (5'-(T)TGAC[CT]-3'), a frequently occurring elicitor-responsive cis-acting element. The polypeptide is Probable WRKY transcription factor 27 (WRKY27) (Arabidopsis thaliana (Mouse-ear cress)).